The chain runs to 301 residues: Methionyl-tRNA formyltransferase (301 aa).

Residue S110–P113 coordinates (6S)-5,6,7,8-tetrahydrofolate.

It belongs to the Fmt family.

It carries out the reaction L-methionyl-tRNA(fMet) + (6R)-10-formyltetrahydrofolate = N-formyl-L-methionyl-tRNA(fMet) + (6S)-5,6,7,8-tetrahydrofolate + H(+). Its function is as follows. Attaches a formyl group to the free amino group of methionyl-tRNA(fMet). The formyl group appears to play a dual role in the initiator identity of N-formylmethionyl-tRNA by promoting its recognition by IF2 and preventing the misappropriation of this tRNA by the elongation apparatus. The polypeptide is Methionyl-tRNA formyltransferase (Anaplasma phagocytophilum (strain HZ)).